Consider the following 292-residue polypeptide: Pantothenate synthetase (292 aa).

30 to 37 (MGALHEGH) is a binding site for ATP. His37 (proton donor) is an active-site residue. Gln61 contributes to the (R)-pantoate binding site. Gln61 contacts beta-alanine. ATP is bound at residue 147–150 (GEKD). Gln153 contributes to the (R)-pantoate binding site. 184-187 (VSSR) is an ATP binding site.

This sequence belongs to the pantothenate synthetase family. Homodimer.

It localises to the cytoplasm. The catalysed reaction is (R)-pantoate + beta-alanine + ATP = (R)-pantothenate + AMP + diphosphate + H(+). The protein operates within cofactor biosynthesis; (R)-pantothenate biosynthesis; (R)-pantothenate from (R)-pantoate and beta-alanine: step 1/1. Its function is as follows. Catalyzes the condensation of pantoate with beta-alanine in an ATP-dependent reaction via a pantoyl-adenylate intermediate. This is Pantothenate synthetase from Chlorobium phaeovibrioides (strain DSM 265 / 1930) (Prosthecochloris vibrioformis (strain DSM 265)).